Here is a 343-residue protein sequence, read N- to C-terminus: Dihydroorotase (343 aa).

Residues His13 and His15 each contribute to the Zn(2+) site. Substrate contacts are provided by residues 15 to 17 (HLR) and Asn41. Zn(2+) is bound by residues Lys99, His136, and His174. N6-carboxylysine is present on Lys99. Position 136 (His136) interacts with substrate. A substrate-binding site is contributed by Leu219. Asp247 provides a ligand contact to Zn(2+). Asp247 is a catalytic residue. Positions 251 and 263 each coordinate substrate.

It belongs to the metallo-dependent hydrolases superfamily. DHOase family. Class II DHOase subfamily. Homodimer. The cofactor is Zn(2+).

It carries out the reaction (S)-dihydroorotate + H2O = N-carbamoyl-L-aspartate + H(+). It functions in the pathway pyrimidine metabolism; UMP biosynthesis via de novo pathway; (S)-dihydroorotate from bicarbonate: step 3/3. In terms of biological role, catalyzes the reversible cyclization of carbamoyl aspartate to dihydroorotate. The sequence is that of Dihydroorotase from Shewanella baltica (strain OS195).